Consider the following 306-residue polypeptide: Leucine-rich repeat-containing protein 59 (306 aa).

The residue at position 1 (Met-1) is an N-acetylmethionine. N-acetylthreonine; in Leucine-rich repeat-containing protein 59, N-terminally processed is present on Thr-2. Topologically, residues 2 to 244 are cytoplasmic; it reads TKAGSKGGNL…KPPPRKHTRS (243 aa). LRR repeat units lie at residues 10–31, 40–62, 63–84, 86–107, and 109–128; these read NLRDKLDGNELDLSLSDLNEVP, KATVLDLSCNKLTTLPSDFCGLT, HLVKLDLSKNKLRQLPADFGRL, NLQHLDLLNNRLVTLPVSFAQL, and SLKWLDLKDNPLDPVLAKVA. Phosphoserine is present on residues Ser-23 and Ser-25. An N6-succinyllysine modification is found at Lys-73. Lys-135 is modified (N6-acetyllysine). Residues 152–216 are a coiled coil; sequence QADQERERQR…KAAKREQEKK (65 aa). Residues 175-221 show a composition bias toward basic and acidic residues; that stretch reads AKQRAKEAQERELRKREKAEEKERRRKEYDALKAAKREQEKKPKKET. Residues 175-241 are disordered; it reads AKQRAKEAQE…RPRKPPPRKH (67 aa). Over residues 229–241 the composition is skewed to basic residues; the sequence is SSSRPRKPPPRKH. The helical transmembrane segment at 245-265 threads the bilayer; it reads WAVLKLLLLLLLCVAGGLVAC. Over 266–306 the chain is Lumenal; it reads RVTELQQQPLCTSVNTIYDNAVRGLRSHDILQWVLQTDSQQ.

In terms of assembly, can form homodimers. Interacts with SGO1. Interacts with FGF1.

Its subcellular location is the microsome membrane. It is found in the endoplasmic reticulum membrane. The protein localises to the nucleus envelope. Required for nuclear import of FGF1, but not that of FGF2. Might regulate nuclear import of exogenous FGF1 by facilitating interaction with the nuclear import machinery and by transporting cytosolic FGF1 to, and possibly through, the nuclear pores. The chain is Leucine-rich repeat-containing protein 59 (LRRC59) from Bos taurus (Bovine).